The primary structure comprises 794 residues: Lon protease (794 aa).

Positions valine 13–valine 204 constitute a Lon N-terminal domain. Residue glycine 356–threonine 363 coordinates ATP. Positions lysine 592 to proline 773 constitute a Lon proteolytic domain. Catalysis depends on residues serine 679 and lysine 722. Positions threonine 774–alanine 788 are enriched in low complexity. The interval threonine 774 to glutamine 794 is disordered.

Belongs to the peptidase S16 family. Homohexamer. Organized in a ring with a central cavity.

It is found in the cytoplasm. It carries out the reaction Hydrolysis of proteins in presence of ATP.. Its function is as follows. ATP-dependent serine protease that mediates the selective degradation of mutant and abnormal proteins as well as certain short-lived regulatory proteins. Required for cellular homeostasis and for survival from DNA damage and developmental changes induced by stress. Degrades polypeptides processively to yield small peptide fragments that are 5 to 10 amino acids long. Binds to DNA in a double-stranded, site-specific manner. The polypeptide is Lon protease (Citrifermentans bemidjiense (strain ATCC BAA-1014 / DSM 16622 / JCM 12645 / Bem) (Geobacter bemidjiensis)).